Consider the following 490-residue polypeptide: Dual specificity protein kinase CLK3 (490 aa).

Residues 1 to 138 (MHHCKRYRSP…SKRSSRSVED (138 aa)) form a disordered region. Residue Tyr7 is modified to Phosphotyrosine. Phosphoserine occurs at positions 9, 49, 51, 67, 76, and 78. 2 stretches are compositionally biased toward basic and acidic residues: residues 26 to 56 (YSRE…DRLP) and 63 to 76 (ERRD…EERS). Over residues 88–116 (RSRHRRRSRERGPYRTRKHAHHCHKRRTR) the composition is skewed to basic residues. Residues 117–130 (SCSSASSRSQQSSK) show a composition bias toward low complexity. Ser135 carries the post-translational modification Phosphoserine. A Protein kinase domain is found at 156–472 (YEIVGNLGEG…LAEALLHPFF (317 aa)). Residues 162-170 (LGEGTFGKV) and Lys186 contribute to the ATP site. The Proton acceptor role is filled by Asp283.

It belongs to the protein kinase superfamily. CMGC Ser/Thr protein kinase family. Lammer subfamily. Post-translationally, autophosphorylates on all three types of residues. As to expression, endothelial cells.

It is found in the nucleus. It localises to the cytoplasm. Its subcellular location is the cytoplasmic vesicle. The protein localises to the secretory vesicle. The protein resides in the acrosome. It is found in the nucleus speckle. It catalyses the reaction L-seryl-[protein] + ATP = O-phospho-L-seryl-[protein] + ADP + H(+). It carries out the reaction L-threonyl-[protein] + ATP = O-phospho-L-threonyl-[protein] + ADP + H(+). The enzyme catalyses L-tyrosyl-[protein] + ATP = O-phospho-L-tyrosyl-[protein] + ADP + H(+). With respect to regulation, leucettine L41 inhibits its kinase activity and affects the regulation of alternative splicing mediated by phosphorylation of SR proteins. In terms of biological role, dual specificity kinase acting on both serine/threonine and tyrosine-containing substrates. Phosphorylates serine- and arginine-rich (SR) proteins of the spliceosomal complex. May be a constituent of a network of regulatory mechanisms that enable SR proteins to control RNA splicing and can cause redistribution of SR proteins from speckles to a diffuse nucleoplasmic distribution. Phosphorylates SRSF1 and SRSF3. Regulates the alternative splicing of tissue factor (F3) pre-mRNA in endothelial cells. The sequence is that of Dual specificity protein kinase CLK3 from Homo sapiens (Human).